Reading from the N-terminus, the 81-residue chain is Large ribosomal subunit protein bL31B (81 aa).

This sequence belongs to the bacterial ribosomal protein bL31 family. Type B subfamily. In terms of assembly, part of the 50S ribosomal subunit.

The sequence is that of Large ribosomal subunit protein bL31B from Bacillus cereus (strain ATCC 10987 / NRS 248).